The primary structure comprises 238 residues: 2-C-methyl-D-erythritol 4-phosphate cytidylyltransferase (238 aa).

This sequence belongs to the IspD/TarI cytidylyltransferase family. IspD subfamily.

It catalyses the reaction 2-C-methyl-D-erythritol 4-phosphate + CTP + H(+) = 4-CDP-2-C-methyl-D-erythritol + diphosphate. It functions in the pathway isoprenoid biosynthesis; isopentenyl diphosphate biosynthesis via DXP pathway; isopentenyl diphosphate from 1-deoxy-D-xylulose 5-phosphate: step 2/6. Its function is as follows. Catalyzes the formation of 4-diphosphocytidyl-2-C-methyl-D-erythritol from CTP and 2-C-methyl-D-erythritol 4-phosphate (MEP). This Pelotomaculum thermopropionicum (strain DSM 13744 / JCM 10971 / SI) protein is 2-C-methyl-D-erythritol 4-phosphate cytidylyltransferase.